The chain runs to 627 residues: Phosphomethylpyrimidine synthase (627 aa).

The span at 1–24 shows a compositional bias: polar residues; that stretch reads MSATQKNNITRLEQLDRQSTQPFP. The interval 1-29 is disordered; sequence MSATQKNNITRLEQLDRQSTQPFPNSRKV. Residues asparagine 231, methionine 260, tyrosine 289, histidine 325, 345–347, 386–389, and glutamate 425 contribute to the substrate site; these read SRG and DGLR. Residue histidine 429 coordinates Zn(2+). Residue tyrosine 452 participates in substrate binding. Histidine 493 is a Zn(2+) binding site. Residues cysteine 573, cysteine 576, and cysteine 581 each contribute to the [4Fe-4S] cluster site.

This sequence belongs to the ThiC family. Homodimer. The cofactor is [4Fe-4S] cluster.

It carries out the reaction 5-amino-1-(5-phospho-beta-D-ribosyl)imidazole + S-adenosyl-L-methionine = 4-amino-2-methyl-5-(phosphooxymethyl)pyrimidine + CO + 5'-deoxyadenosine + formate + L-methionine + 3 H(+). Its pathway is cofactor biosynthesis; thiamine diphosphate biosynthesis. Functionally, catalyzes the synthesis of the hydroxymethylpyrimidine phosphate (HMP-P) moiety of thiamine from aminoimidazole ribotide (AIR) in a radical S-adenosyl-L-methionine (SAM)-dependent reaction. The chain is Phosphomethylpyrimidine synthase from Pseudomonas aeruginosa (strain LESB58).